A 55-amino-acid polypeptide reads, in one-letter code: ATP synthase protein 8 (55 aa).

Residues 7 to 24 form a helical membrane-spanning segment; sequence NPWLFIMLMSWLTFSLII. The tract at residues 35–55 is disordered; sequence NPPSNKTPTTTKTSPWTWPWT. Low complexity predominate over residues 37–55; it reads PSNKTPTTTKTSPWTWPWT.

The protein belongs to the ATPase protein 8 family. As to quaternary structure, F-type ATPases have 2 components, CF(1) - the catalytic core - and CF(0) - the membrane proton channel.

Its subcellular location is the mitochondrion membrane. Its function is as follows. Mitochondrial membrane ATP synthase (F(1)F(0) ATP synthase or Complex V) produces ATP from ADP in the presence of a proton gradient across the membrane which is generated by electron transport complexes of the respiratory chain. F-type ATPases consist of two structural domains, F(1) - containing the extramembraneous catalytic core and F(0) - containing the membrane proton channel, linked together by a central stalk and a peripheral stalk. During catalysis, ATP synthesis in the catalytic domain of F(1) is coupled via a rotary mechanism of the central stalk subunits to proton translocation. Part of the complex F(0) domain. Minor subunit located with subunit a in the membrane. The chain is ATP synthase protein 8 (MT-ATP8) from Corythaeola cristata (Great blue turaco).